The sequence spans 145 residues: Large-conductance mechanosensitive channel (145 aa).

A run of 3 helical transmembrane segments spans residues 14–34 (VMDL…VKSL), 38–58 (LIMP…YFLP), and 81–101 (GSFL…FLMV).

The protein belongs to the MscL family. Homopentamer.

It localises to the cell inner membrane. Channel that opens in response to stretch forces in the membrane lipid bilayer. May participate in the regulation of osmotic pressure changes within the cell. This Rhizobium leguminosarum bv. trifolii (strain WSM2304) protein is Large-conductance mechanosensitive channel.